Consider the following 335-residue polypeptide: Rho guanine nucleotide exchange factor 39 (335 aa).

Positions 22 to 197 (KRACTARELL…SETAQRVHTI (176 aa)) constitute a DH domain. Positions 227–331 (WFLRQGWLLV…WYHSLTWAIS (105 aa)) constitute a PH domain.

As to expression, strongly expressed in hepatocellular carcinoma (HCC) compared with their non-cancerous counterparts.

It is found in the cell membrane. In terms of biological role, promotes cell proliferation. The protein is Rho guanine nucleotide exchange factor 39 (ARHGEF39) of Homo sapiens (Human).